The primary structure comprises 357 residues: DNA replication and repair protein RecF (357 aa).

30-37 (GANGSGKT) contributes to the ATP binding site.

The protein belongs to the RecF family.

It is found in the cytoplasm. The RecF protein is involved in DNA metabolism; it is required for DNA replication and normal SOS inducibility. RecF binds preferentially to single-stranded, linear DNA. It also seems to bind ATP. The polypeptide is DNA replication and repair protein RecF (Salmonella paratyphi A (strain ATCC 9150 / SARB42)).